We begin with the raw amino-acid sequence, 351 residues long: Epoxyqueuosine reductase (351 aa).

The active-site Proton donor is D131. In terms of domain architecture, 4Fe-4S ferredoxin-type spans 177–205 (EDQPVDYGCGSCTRCVDFCPTKALLGDGR). C185, C188, C191, C195, C211, C237, C240, and C244 together coordinate [4Fe-4S] cluster.

The protein belongs to the QueG family. As to quaternary structure, monomer. It depends on cob(II)alamin as a cofactor. The cofactor is [4Fe-4S] cluster.

It is found in the cytoplasm. It catalyses the reaction epoxyqueuosine(34) in tRNA + AH2 = queuosine(34) in tRNA + A + H2O. It functions in the pathway tRNA modification; tRNA-queuosine biosynthesis. Functionally, catalyzes the conversion of epoxyqueuosine (oQ) to queuosine (Q), which is a hypermodified base found in the wobble positions of tRNA(Asp), tRNA(Asn), tRNA(His) and tRNA(Tyr). This Lactococcus garvieae (strain Lg2) (Enterococcus seriolicida) protein is Epoxyqueuosine reductase.